The chain runs to 494 residues: Succinoglycan biosynthesis transport protein ExoT (494 aa).

13 helical membrane passes run 16 to 36 (WSVLSKTGTFGLKFVTVPILA), 44 to 64 (FGAVAVALTVVQFLAMIGGAG), 82 to 102 (SVFWANLAIALMMALGLFVFA), 105 to 125 (LATLLGAPEAAYLLRIMSLLI), 157 to 177 (LGAVIAVLLALLGFGIWSLLA), 215 to 235 (FGMMGSEIANFITFQSPMVVI), 253 to 273 (FASIPNQVVLSAVMGVLFPTF), 297 to 317 (LLAPMMFGLWALAEPAMLVLF), 321 to 341 (WAYAWPVLGLLALSKGILTPC), 343 to 363 (TFIPYLKGVGQGAVLFWWALI), 384 to 404 (AMIWLCIVNAVTLVGYSWVVF), 421 to 441 (PMIAALLMALVVRFLLEHFGA), and 447 to 467 (VLQLIAGTAIGSVIYTVLILL).

It belongs to the polysaccharide synthase family.

It localises to the cell membrane. It participates in glycan metabolism; exopolysaccharide biosynthesis. The sequence is that of Succinoglycan biosynthesis transport protein ExoT (exoT) from Rhizobium meliloti (strain 1021) (Ensifer meliloti).